Consider the following 514-residue polypeptide: Protein Tube (514 aa).

Disordered stretches follow at residues 226–250 (VPQQ…RSSR), 255–274 (TASN…SNTA), 324–343 (LDAG…STST), 366–385 (ASDA…VPDM), and 413–514 (NGAK…ELQQ). Positions 259–274 (VAPTTASNAPSASNTA) are enriched in low complexity. Positions 422–433 (ADNNSSGTNSLS) are enriched in polar residues. The segment covering 434–460 (NDDDEQKEDDDDDDDDDVVDVDDEEAD) has biased composition (acidic residues). Over residues 477 to 514 (TTVTCTSGENSFEFTNDSSSASNDDYTNNIPNLSELQQ) the composition is skewed to polar residues.

In terms of tissue distribution, maternal and zygotic gene product.

It is found in the cytoplasm. In terms of biological role, required for the determination of embryonic dorsoventral polarity. Is involved in transduction of information regulating nuclear import of dorsal protein. This Drosophila virilis (Fruit fly) protein is Protein Tube (tub).